The following is a 162-amino-acid chain: Putative ripening-related protein 7 (162 aa).

The signal sequence occupies residues 1–30; that stretch reads MAAAAASTKIVAVVVAVLLAILEMPSCAVA.

The protein belongs to the kiwellin family.

It is found in the secreted. This is Putative ripening-related protein 7 from Oryza sativa subsp. japonica (Rice).